The primary structure comprises 125 residues: Photosystem II extrinsic protein U (125 aa).

An N-terminal signal peptide occupies residues 1–29 (MKRLLSWLTGLVVIAGLLIGLLVPPSVSA).

It belongs to the PsbU family. As to quaternary structure, PSII is composed of 1 copy each of membrane proteins PsbA, PsbB, PsbC, PsbD, PsbE, PsbF, PsbH, PsbI, PsbJ, PsbK, PsbL, PsbM, PsbT, PsbX, PsbY, PsbZ, Psb30/Ycf12, peripheral proteins PsbO, CyanoQ (PsbQ), PsbU, PsbV and a large number of cofactors. It forms dimeric complexes.

It is found in the cellular thylakoid membrane. Its function is as follows. One of the extrinsic, lumenal subunits of photosystem II (PSII). PSII is a light-driven water plastoquinone oxidoreductase, using light energy to abstract electrons from H(2)O, generating a proton gradient subsequently used for ATP formation. The extrinsic proteins stabilize the structure of photosystem II oxygen-evolving complex (OEC), the ion environment of oxygen evolution and protect the OEC against heat-induced inactivation. The sequence is that of Photosystem II extrinsic protein U from Synechococcus sp. (strain CC9311).